A 195-amino-acid chain; its full sequence is 2-cysteine peroxiredoxin, chloroplastic (195 aa).

The 159-residue stretch at 3 to 161 (IRVGQKAPDF…ALRTLQAIQY (159 aa)) folds into the Thioredoxin domain. Residue C49 is the Cysteine sulfenic acid (-SOH) intermediate of the active site.

The protein belongs to the peroxiredoxin family. AhpC/Prx1 subfamily. In terms of assembly, homodimer; disulfide-linked, upon oxidation.

The protein resides in the plastid. It is found in the chloroplast. It carries out the reaction a hydroperoxide + [thioredoxin]-dithiol = an alcohol + [thioredoxin]-disulfide + H2O. Its function is as follows. Thiol-specific peroxidase that catalyzes the reduction of hydrogen peroxide and organic hydroperoxides to water and alcohols, respectively. Plays a role in cell protection against oxidative stress by detoxifying peroxides. The sequence is that of 2-cysteine peroxiredoxin, chloroplastic from Chattonella marina var. antiqua (Red tide flagellate).